A 649-amino-acid chain; its full sequence is Putative cystathionine gamma-synthase YML082W (649 aa).

The segment at 242 to 273 (NEANHGEDHDGGISGEVDSQEEPHNGLVSTIP) is disordered. Ser-287 is modified (phosphoserine). Lys-451 is subject to N6-(pyridoxal phosphate)lysine.

The protein belongs to the trans-sulfuration enzymes family. MET7 subfamily. The cofactor is pyridoxal 5'-phosphate.

It catalyses the reaction O-succinyl-L-homoserine + L-cysteine = L,L-cystathionine + succinate + H(+). Its pathway is amino-acid biosynthesis; L-methionine biosynthesis via de novo pathway; L-cystathionine from O-succinyl-L-homoserine: step 1/1. In terms of biological role, catalyzes the formation of L-cystathionine from O-succinyl-L-homoserine (OSHS) and L-cysteine, via a gamma-replacement reaction. In the absence of thiol, catalyzes gamma-elimination to form 2-oxobutanoate, succinate and ammonia. This is Putative cystathionine gamma-synthase YML082W from Saccharomyces cerevisiae (strain ATCC 204508 / S288c) (Baker's yeast).